Here is a 285-residue protein sequence, read N- to C-terminus: MKKHKSSIKCFKIDQISQQPETDLVFTKRSECKVKDELFSDKENSILCKQLKELDLVVSSNKEFLNEKTSDQISFLKPRETVVEKKLANGSIWPNETSHLDKSRDLSSHSNGLDALAMTPYIVKENNKTHLSPRGNYPSEAEKSCDFYGQPLHFYRENTSPCLYGSSLSNVFTEKSSDYRHGLGSPTSLVSSNTASKLHLGRKDIVKLSELRNCINSSKDSNQIQELENLLRKEKQRNTEHEKIIRRMKKELKELHSQFNFAKKLFISALSANQDILDKMNDEFN.

The protein localises to the cytoplasm. Functionally, has a role in meiosis. This Schizosaccharomyces pombe (strain 972 / ATCC 24843) (Fission yeast) protein is Meiotically up-regulated gene 74 protein (mug74).